Consider the following 86-residue polypeptide: Exodeoxyribonuclease 7 small subunit (86 aa).

The disordered stretch occupies residues 64 to 86 (SNPETVQDKTDTDEPDSNEFSLT).

It belongs to the XseB family. Heterooligomer composed of large and small subunits.

The protein resides in the cytoplasm. The enzyme catalyses Exonucleolytic cleavage in either 5'- to 3'- or 3'- to 5'-direction to yield nucleoside 5'-phosphates.. Bidirectionally degrades single-stranded DNA into large acid-insoluble oligonucleotides, which are then degraded further into small acid-soluble oligonucleotides. The sequence is that of Exodeoxyribonuclease 7 small subunit from Akkermansia muciniphila (strain ATCC BAA-835 / DSM 22959 / JCM 33894 / BCRC 81048 / CCUG 64013 / CIP 107961 / Muc).